A 1363-amino-acid polypeptide reads, in one-letter code: Vascular endothelial growth factor receptor 3 (1363 aa).

The signal sequence occupies residues 1 to 24 (MQPGAALNRRLWLCLGLLQGLANG). The Extracellular segment spans residues 25-775 (YSMTPPTLNI…EGSEDKGSME (751 aa)). Asparagine 33, asparagine 104, asparagine 166, asparagine 251, asparagine 299, and asparagine 411 each carry an N-linked (GlcNAc...) asparagine glycan. Ig-like C2-type domains follow at residues 44–118 (GDSL…YIKA), 151–213 (KDSM…WGDQ), 230–326 (YDIQ…TEVI), 331–415 (PFIS…ISLE), 422–552 (PHIH…FYVT), 555–671 (PDGF…KYLS), and 678–764 (PRLT…ASVA). 2 cysteine pairs are disulfide-bonded: cysteine 51-cysteine 111 and cysteine 158-cysteine 206. Cysteine 252 and cysteine 310 are disulfide-bonded. 3 cysteine pairs are disulfide-bonded: cysteine 445/cysteine 534, cysteine 466/cysteine 486, and cysteine 578/cysteine 653. Asparagine 515, asparagine 527, asparagine 582, asparagine 594, and asparagine 683 each carry an N-linked (GlcNAc...) asparagine glycan. Cysteine 699 and cysteine 751 are oxidised to a cystine. A glycan (N-linked (GlcNAc...) asparagine) is linked at asparagine 758. A helical transmembrane segment spans residues 776-796 (IVILIGTGVIAVFFWVLLLLI). Over 797–1363 (FCNMKRPAHA…GSTFFADSNY (567 aa)) the chain is Cytoplasmic. Phosphotyrosine; by SRC is present on residues tyrosine 830 and tyrosine 833. Residues 845-1173 (LHLGRVLGHG…DLVEILGDLL (329 aa)) form the Protein kinase domain. Residues 851-859 (LGHGAFGKV) and lysine 879 each bind ATP. The active-site Proton acceptor is aspartate 1037. Tyrosine 1063 is modified (phosphotyrosine; by autocatalysis and SRC). Tyrosine 1068, tyrosine 1230, tyrosine 1231, and tyrosine 1265 each carry phosphotyrosine; by autocatalysis. Residues 1289 to 1317 (SRHRQEGSFSRKDPGQHMDISRGHPDLQG) show a composition bias toward basic and acidic residues. The disordered stretch occupies residues 1289–1330 (SRHRQEGSFSRKDPGQHMDISRGHPDLQGRRRRPTQGAQGGK). 2 positions are modified to phosphotyrosine; by autocatalysis and SRC: tyrosine 1333 and tyrosine 1337. Residue tyrosine 1363 is modified to Phosphotyrosine; by autocatalysis.

The protein belongs to the protein kinase superfamily. Tyr protein kinase family. CSF-1/PDGF receptor subfamily. In terms of assembly, interacts with VEGFC and VEGFD. Monomer in the absence of bound VEGFC or VEGFD. Homodimer in the presence of bound VEGFC or VEGFD. Can also form a heterodimer with KDR. Interacts with PTPN14; the interaction is enhanced by stimulation with VEGFC. Interacts with CRK, GRB2, PTK2/FAK1, SHC1, PIK3R1 and PTPN11/SHP-2. Identified in a complex with SRC and ITGB1. Identified in a complex with SRC and ITGB1. In terms of processing, autophosphorylated on tyrosine residues upon ligand binding. Autophosphorylation occurs in trans, i.e. one subunit of the dimeric receptor phosphorylates tyrosine residues on the other subunit. Phosphorylation in response to H(2)O(2) is mediated by a process that requires SRC and PRKCD activity. Phosphorylation at Tyr-1068 is required for autophosphorylation at additional tyrosine residues. Phosphorylation at Tyr-1063 and Tyr-1337 is important for interaction with CRK and subsequent activation of MAPK8. Phosphorylation at Tyr-1230, Tyr-1231 and Tyr-1337 is important for interaction with GRB2 and subsequent activation of the AKT1 and MAPK1/ERK2 and/or MAPK3/ERK1 signaling pathways. In response to endothelial cell adhesion onto collagen, can also be phosphorylated in the absence of FLT4 kinase activity by SRC.

The protein localises to the cell membrane. The protein resides in the cytoplasm. Its subcellular location is the nucleus. It carries out the reaction L-tyrosyl-[protein] + ATP = O-phospho-L-tyrosyl-[protein] + ADP + H(+). Its activity is regulated as follows. Present in an inactive conformation in the absence of bound ligand. Binding of VEGFC or VEGFD leads to dimerization and activation by autophosphorylation on tyrosine residues. In terms of biological role, tyrosine-protein kinase that acts as a cell-surface receptor for VEGFC and VEGFD, and plays an essential role in adult lymphangiogenesis and in the development of the vascular network and the cardiovascular system during embryonic development. Promotes proliferation, survival and migration of endothelial cells, and regulates angiogenic sprouting. Signaling by activated FLT4 leads to enhanced production of VEGFC, and to a lesser degree VEGFA, thereby creating a positive feedback loop that enhances FLT4 signaling. Modulates KDR signaling by forming heterodimers. Mediates activation of the MAPK1/ERK2, MAPK3/ERK1 signaling pathway, of MAPK8 and the JUN signaling pathway, and of the AKT1 signaling pathway. Phosphorylates SHC1. Mediates phosphorylation of PIK3R1, the regulatory subunit of phosphatidylinositol 3-kinase. Promotes phosphorylation of MAPK8 at 'Thr-183' and 'Tyr-185', and of AKT1 at 'Ser-473'. This Rattus norvegicus (Rat) protein is Vascular endothelial growth factor receptor 3 (Flt4).